Here is a 63-residue protein sequence, read N- to C-terminus: MSKRCAITGKGPMVGNNVSHANNRTKRRFMPNLRTVRVMLEDGTTRKIRVAASTLRTMKKQSH.

Residues 1–20 (MSKRCAITGKGPMVGNNVSH) form a disordered region.

Belongs to the bacterial ribosomal protein bL28 family.

This is Large ribosomal subunit protein bL28 from Campylobacter fetus subsp. fetus (strain 82-40).